The primary structure comprises 218 residues: Dynein axonemal assembly factor 6 (218 aa).

The interval 66–103 (MGPGNIGPPKAKESKAIPEPRSDESENIWNPEEVPEGA) is disordered. Basic and acidic residues predominate over residues 75 to 89 (KAKESKAIPEPRSDE).

The protein belongs to the PIH1 family. As to quaternary structure, interacts with HSPA1A/B, HSP90AA1 and DNAI2. Interacts with DNAAF2 and DNAAF4. In terms of tissue distribution, specifically expressed in testis. Detected in pachytene spermatocytes from 5 weeks of age and in pachytene and diplotene spermatocytes of adult mice. Not detected in spermatids or mature sperm.

The protein localises to the cytoplasm. Its subcellular location is the golgi apparatus. It is found in the trans-Golgi network. Functionally, plays a role in cytoplasmic pre-assembly of axonemal dynein. This Mus musculus (Mouse) protein is Dynein axonemal assembly factor 6.